A 322-amino-acid chain; its full sequence is Undecaprenyl-phosphate 4-deoxy-4-formamido-L-arabinose transferase (322 aa).

Residues 1–235 lie on the Cytoplasmic side of the membrane; the sequence is MFEIHPVKKV…TCLTTTPLRM (235 aa). The chain crosses the membrane as a helical span at residues 236 to 256; it reads LSLLGSIIAIGGFSIAVLLVI. The Periplasmic portion of the chain corresponds to 257 to 269; that stretch reads LRLTFGPQWAAEG. Residues 270–290 form a helical membrane-spanning segment; it reads VFMLFAVLFTFIGAQFIGMGL. Topologically, residues 291 to 322 are cytoplasmic; that stretch reads LGEYIGRIYTDVRARPRYFVQQVIRPSSKENE.

It belongs to the glycosyltransferase 2 family.

It localises to the cell inner membrane. It carries out the reaction UDP-4-deoxy-4-formamido-beta-L-arabinose + di-trans,octa-cis-undecaprenyl phosphate = 4-deoxy-4-formamido-alpha-L-arabinopyranosyl di-trans,octa-cis-undecaprenyl phosphate + UDP. It participates in glycolipid biosynthesis; 4-amino-4-deoxy-alpha-L-arabinose undecaprenyl phosphate biosynthesis; 4-amino-4-deoxy-alpha-L-arabinose undecaprenyl phosphate from UDP-4-deoxy-4-formamido-beta-L-arabinose and undecaprenyl phosphate: step 1/2. The protein operates within bacterial outer membrane biogenesis; lipopolysaccharide biosynthesis. Catalyzes the transfer of 4-deoxy-4-formamido-L-arabinose from UDP to undecaprenyl phosphate. The modified arabinose is attached to lipid A and is required for resistance to polymyxin and cationic antimicrobial peptides. This is Undecaprenyl-phosphate 4-deoxy-4-formamido-L-arabinose transferase from Escherichia coli (strain SMS-3-5 / SECEC).